Reading from the N-terminus, the 190-residue chain is Peptidyl-tRNA hydrolase (190 aa).

Tyr14 lines the tRNA pocket. His19 serves as the catalytic Proton acceptor. Residues Tyr64, Asn66, and Asn112 each coordinate tRNA.

It belongs to the PTH family. In terms of assembly, monomer.

The protein localises to the cytoplasm. The enzyme catalyses an N-acyl-L-alpha-aminoacyl-tRNA + H2O = an N-acyl-L-amino acid + a tRNA + H(+). Its function is as follows. Hydrolyzes ribosome-free peptidyl-tRNAs (with 1 or more amino acids incorporated), which drop off the ribosome during protein synthesis, or as a result of ribosome stalling. In terms of biological role, catalyzes the release of premature peptidyl moieties from peptidyl-tRNA molecules trapped in stalled 50S ribosomal subunits, and thus maintains levels of free tRNAs and 50S ribosomes. This chain is Peptidyl-tRNA hydrolase, found in Chlorobaculum parvum (strain DSM 263 / NCIMB 8327) (Chlorobium vibrioforme subsp. thiosulfatophilum).